Here is a 1914-residue protein sequence, read N- to C-terminus: Diacylglycerol kinase eta (1914 aa).

Residues 1–10 (MSHLKLDTLH) are compositionally biased toward basic and acidic residues. Residues 1 to 37 (MSHLKLDTLHVQRSPRGSRRSSRSSGRSSACSSGSIS) are disordered. Positions 23–37 (RSSGRSSACSSGSIS) are enriched in low complexity. A PH domain is found at 82–175 (AIIKEGFLLK…WLGSLKTATA (94 aa)). Phorbol-ester/DAG-type zinc fingers lie at residues 195–245 (HHHW…IANC) and 268–319 (PHQW…AVAC). Residues 350–486 (GNFSPLLVFV…DRWSIMVFEK (137 aa)) form the DAGKc domain. 5 disordered regions span residues 621-642 (EKDQ…SEKE), 783-805 (GANI…NTPT), 1016-1053 (TLCS…PPRI), 1116-1135 (QHRG…TPTN), and 1175-1216 (PNTI…TVSL). A compositionally biased stretch (polar residues) spans 1175–1187 (PNTILTTSTSPTK). In terms of domain architecture, SAM spans 1851–1914 (WSVNEVVTWL…LQAIKDLSEN (64 aa)).

This sequence belongs to the eukaryotic diacylglycerol kinase family.

The protein resides in the cytoplasm. It carries out the reaction a 1,2-diacyl-sn-glycerol + ATP = a 1,2-diacyl-sn-glycero-3-phosphate + ADP + H(+). Functionally, phosphorylates diacylglycerol (DAG) to generate phosphatidic acid (PA). This chain is Diacylglycerol kinase eta, found in Drosophila sechellia (Fruit fly).